The chain runs to 1215 residues: von Willebrand factor A domain-containing protein 5B1 (1215 aa).

The signal sequence occupies residues 1–18 (MPGLLNCLTGAALPLMES). Residues 19-141 (DVTSYVSGYA…NVTVFISTSS (123 aa)) enclose the VIT domain. Asparagine 132 is a glycosylation site (N-linked (GlcNAc...) asparagine). Positions 353–532 (EFIFLIDRSN…KAMAPVLSDV (180 aa)) constitute a VWFA domain. Residues 595–674 (SVFYPSQDEG…DPTGTARRYP (80 aa)) are disordered. Polar residues-rich tracts occupy residues 608–621 (GSGN…QGQT) and 646–667 (YSTN…SDPT). Residue tyrosine 879 is modified to Phosphotyrosine. Disordered regions lie at residues 934 to 953 (GSSA…SSAA), 964 to 999 (QDSP…APSS), and 1100 to 1121 (SPQD…SLKS). Composition is skewed to polar residues over residues 964–975 (QDSPTSTFNKTP), 990–999 (QNLSASAPSS), and 1100–1112 (SPQD…SSPP).

Its subcellular location is the secreted. The sequence is that of von Willebrand factor A domain-containing protein 5B1 (Vwa5b1) from Mus musculus (Mouse).